The sequence spans 177 residues: MKLPKEGDFITIQSYKHDGRLHRTWRDTMVLKTTENALIGVNDHTLVTESDGRRWVTREPAIVYFHKKYWFNIIAMIRDNGVSYYCNLASPYLMDAEALKYIDYDLDVKVFADGEKRLLDVDEYEMHKQEMHYSPNLDFILKENVKLLVDWINKEKGPFSKAYVSIWYKRYLELKNR.

R23 functions as the Proton donor in the catalytic mechanism. Mg(2+) contacts are provided by N87, D103, D105, D107, D120, and E123.

It belongs to the Ntdp family. Mg(2+) serves as cofactor.

It carries out the reaction a ribonucleoside 5'-triphosphate + H2O = a ribonucleoside 5'-diphosphate + phosphate + H(+). It catalyses the reaction a ribonucleoside 5'-diphosphate + H2O = a ribonucleoside 5'-phosphate + phosphate + H(+). Functionally, has nucleoside phosphatase activity towards nucleoside triphosphates and nucleoside diphosphates. The protein is Nucleoside triphosphate/diphosphate phosphatase of Streptococcus equi subsp. zooepidemicus (strain MGCS10565).